The primary structure comprises 75 residues: Exodeoxyribonuclease 7 small subunit (75 aa).

The protein belongs to the XseB family. Heterooligomer composed of large and small subunits.

The protein localises to the cytoplasm. It catalyses the reaction Exonucleolytic cleavage in either 5'- to 3'- or 3'- to 5'-direction to yield nucleoside 5'-phosphates.. In terms of biological role, bidirectionally degrades single-stranded DNA into large acid-insoluble oligonucleotides, which are then degraded further into small acid-soluble oligonucleotides. This Chlamydia abortus (strain DSM 27085 / S26/3) (Chlamydophila abortus) protein is Exodeoxyribonuclease 7 small subunit.